The following is a 249-amino-acid chain: Indole-3-glycerol phosphate synthase (249 aa).

It belongs to the TrpC family.

The enzyme catalyses 1-(2-carboxyphenylamino)-1-deoxy-D-ribulose 5-phosphate + H(+) = (1S,2R)-1-C-(indol-3-yl)glycerol 3-phosphate + CO2 + H2O. The protein operates within amino-acid biosynthesis; L-tryptophan biosynthesis; L-tryptophan from chorismate: step 4/5. The chain is Indole-3-glycerol phosphate synthase from Pyrobaculum aerophilum (strain ATCC 51768 / DSM 7523 / JCM 9630 / CIP 104966 / NBRC 100827 / IM2).